Consider the following 130-residue polypeptide: Small ribosomal subunit protein uS9 (130 aa).

The tract at residues Leu98–Arg130 is disordered. A compositionally biased stretch (basic residues) spans Lys111–Arg130.

This sequence belongs to the universal ribosomal protein uS9 family.

This Staphylococcus saprophyticus subsp. saprophyticus (strain ATCC 15305 / DSM 20229 / NCIMB 8711 / NCTC 7292 / S-41) protein is Small ribosomal subunit protein uS9.